The primary structure comprises 169 residues: Ion-translocating oxidoreductase complex subunit B (169 aa).

The hydrophobic stretch occupies residues 1 to 23; that stretch reads MIISIIIFSILSFILGVIVSLVS. The 60-residue stretch at 30 to 89 folds into the 4Fe-4S domain; that stretch reads SNLSLINDIDELLPQMQCAQCGYPGCYAYSQAIVDGNENIYKCIPGGKEVVLKLENLLNK. C47, C50, C55, C72, C116, C119, C122, C126, C146, C149, C152, and C156 together coordinate [4Fe-4S] cluster. 4Fe-4S ferredoxin-type domains follow at residues 107–136 and 137–166; these read SIVEIDENNCVGCSKCRLVCPVDAVVGTYN and FRHTVLIDSCTGCNLCIPLCPTNCIKKKIM.

It belongs to the 4Fe4S bacterial-type ferredoxin family. RnfB subfamily. The complex is composed of six subunits: RnfA, RnfB, RnfC, RnfD, RnfE and RnfG. The cofactor is [4Fe-4S] cluster.

The protein resides in the cell inner membrane. In terms of biological role, part of a membrane-bound complex that couples electron transfer with translocation of ions across the membrane. The chain is Ion-translocating oxidoreductase complex subunit B from Buchnera aphidicola subsp. Baizongia pistaciae (strain Bp).